The chain runs to 477 residues: ATP synthase subunit beta (477 aa).

148 to 155 (GGAGVGKT) is a binding site for ATP.

Belongs to the ATPase alpha/beta chains family. As to quaternary structure, F-type ATPases have 2 components, CF(1) - the catalytic core - and CF(0) - the membrane proton channel. CF(1) has five subunits: alpha(3), beta(3), gamma(1), delta(1), epsilon(1). CF(0) has three main subunits: a(1), b(2) and c(9-12). The alpha and beta chains form an alternating ring which encloses part of the gamma chain. CF(1) is attached to CF(0) by a central stalk formed by the gamma and epsilon chains, while a peripheral stalk is formed by the delta and b chains.

The protein localises to the cell inner membrane. The enzyme catalyses ATP + H2O + 4 H(+)(in) = ADP + phosphate + 5 H(+)(out). In terms of biological role, produces ATP from ADP in the presence of a proton gradient across the membrane. The catalytic sites are hosted primarily by the beta subunits. The chain is ATP synthase subunit beta from Psychrobacter arcticus (strain DSM 17307 / VKM B-2377 / 273-4).